Here is a 90-residue protein sequence, read N- to C-terminus: Small ribosomal subunit protein uS17 (90 aa).

This sequence belongs to the universal ribosomal protein uS17 family. Part of the 30S ribosomal subunit.

In terms of biological role, one of the primary rRNA binding proteins, it binds specifically to the 5'-end of 16S ribosomal RNA. The polypeptide is Small ribosomal subunit protein uS17 (Acidiphilium cryptum (strain JF-5)).